A 1218-amino-acid chain; its full sequence is Formin-A (1218 aa).

The 108-residue stretch at 1-108 folds into the C2 domain; that stretch reads MADKLYQIKL…ILGEACNYSV (108 aa). A GBD/FH3 domain is found at 139 to 539; it reads EEKKRHDEIQ…QISLRDKNIG (401 aa). The stretch at 563–638 forms a coiled coil; the sequence is LKSQIESLKK…QLKLTQGTAK (76 aa). The disordered stretch occupies residues 634–762; sequence QGTAKPDSAA…KAAAPPRKEV (129 aa). Over residues 649–747 the composition is skewed to pro residues; the sequence is APPPPPPPMT…FGKGPPPPPG (99 aa). One can recognise an FH1 domain in the interval 652–737; it reads PPPPPMTGGG…AGGPPPPPPP (86 aa). Residues 759–1155 enclose the FH2 domain; it reads RKEVPVPALK…IAKREAAKKL (397 aa). Residues 1034–1061 adopt a coiled-coil conformation; it reads SLSQVQAEVATLRKEFVQVQKSIETLNS. Disordered regions lie at residues 1153 to 1179 and 1198 to 1218; these read KKLK…TVEV and KNRR…PIDL. One can recognise a DAD domain in the interval 1174–1209; it reads GETVEVKESVVDDLLDTIASGDAFKNRRRRARKTDQ.

This sequence belongs to the formin homology family. Diaphanous subfamily. In terms of assembly, interacts (via GBD/FH3 domain) with activated Rho-GTPases.

Its function is as follows. Formins play an important role in the nucleation of actin and the formation of linear actin filaments. This Dictyostelium discoideum (Social amoeba) protein is Formin-A (forA).